We begin with the raw amino-acid sequence, 662 residues long: NADH-ubiquinone oxidoreductase chain 5 (662 aa).

16 helical membrane-spanning segments follow: residues 40–62 (AALSIVAFYEVGLSGSPVSIVIG), 77–99 (LFDSLTVSMLLPVLIVSSLVHLY), 112–129 (RFFSYLSMFTFFMLVLVA), 133–155 (YFIMFVGWEGIGISSYLLINFWY), 168–190 (LTVNRVGDMFLSVGFFAIFWVFG), 200–222 (VAPYINETAITIIGLLLLVGAMA), 243–262 (VSALIHAATLVTAGVYLMLR), 272–294 (TVLVVITWVGALTAFFAATTGLL), 301–320 (VIAYSTCSQMGYLFMAVGLS), 325–347 (ALFHLVNHAFFKALLFLAAGAVI), 360–382 (GGLVNFLPFTYTAILIGSLSLMA), 408–430 (TIAYWLGTISAVFTAFYSFRLVS), 450–472 (APMIIVIPLVILSIMSIVFGYIA), 510–529 (LLPAIGSLFGAGLALYLYHV), 609–631 (GVITSYALYIMLGLVSLIFLVFA), and 636–658 (VFNEYGLSLILVYLSALVLLPSS).

It belongs to the complex I subunit 5 family.

The protein localises to the mitochondrion inner membrane. The enzyme catalyses a ubiquinone + NADH + 5 H(+)(in) = a ubiquinol + NAD(+) + 4 H(+)(out). Its function is as follows. Core subunit of the mitochondrial membrane respiratory chain NADH dehydrogenase (Complex I) that is believed to belong to the minimal assembly required for catalysis. Complex I functions in the transfer of electrons from NADH to the respiratory chain. The immediate electron acceptor for the enzyme is believed to be ubiquinone. This chain is NADH-ubiquinone oxidoreductase chain 5 (ND5), found in Cryptococcus neoformans var. grubii serotype A (strain H99 / ATCC 208821 / CBS 10515 / FGSC 9487) (Filobasidiella neoformans var. grubii).